A 93-amino-acid chain; its full sequence is YcgL domain-containing protein KPK_1976 (93 aa).

The region spanning 1-85 is the YcgL domain; sequence MFCVIYRSTK…PSENLLKKHL (85 aa).

The polypeptide is YcgL domain-containing protein KPK_1976 (Klebsiella pneumoniae (strain 342)).